The following is a 548-amino-acid chain: CBS domain-containing protein CBSCBSPB4 (548 aa).

A compositionally biased stretch (polar residues) spans 1-18; sequence MANQGGPSRKSLSFSGHS. Residues 1-58 form a disordered region; sequence MANQGGPSRKSLSFSGHSFQGRKKASENEGGGGGGSDLLPRRSLTSSRSSISLSGERS. Serine 18 carries the phosphoserine modification. Low complexity predominate over residues 37 to 56; sequence DLLPRRSLTSSRSSISLSGE. CBS domains follow at residues 63–126, 133–190, 233–293, and 301–358; these read VKRL…NLEE, MTKN…ERSV, IIPE…LPQE, and MTPN…AGST. In terms of domain architecture, PB1 spans 411–498; that stretch reads PNTFAFKLQD…KGLKLHLDYT (88 aa). Residues 521 to 543 traverse the membrane as a helical segment; sequence AAAYKTVAAGAALAAGLGVLVYL.

It localises to the membrane. The sequence is that of CBS domain-containing protein CBSCBSPB4 (CBSCBSPB4) from Arabidopsis thaliana (Mouse-ear cress).